The sequence spans 344 residues: MVQVGVIGGTGYVGAELIRLLSNHNKIKISGISSTSYEGKSINSLYPGFYDLKELVCEKDDEVIKRSDLIFLALPSGVSEPIVEKAVAKDKICIDMGADFRFKNESSYKKWYGKNFITPKLHESSVYGLPELNREYIKKSRVIGNPGCYATSVQIGVLPLISKGLIEEKGIIADCKSGLTGAGKTLSESSHFVNCNESFSAYKVANHRHTPEIEENLNSVSKEGVKLTFIPHLIPINRGILSTIYTTPKDPIDIEKIHQKYCEFYKEEPFVRILPLGKVSKINNVRLSNYCCISIHYDSENNKLIIISCLDNMIKGAAGQAIQNMNIVLGFDEKEGLTALPAVF.

C148 is an active-site residue.

The protein belongs to the NAGSA dehydrogenase family. Type 1 subfamily.

The protein resides in the cytoplasm. It catalyses the reaction N-acetyl-L-glutamate 5-semialdehyde + phosphate + NADP(+) = N-acetyl-L-glutamyl 5-phosphate + NADPH + H(+). Its pathway is amino-acid biosynthesis; L-arginine biosynthesis; N(2)-acetyl-L-ornithine from L-glutamate: step 3/4. Its function is as follows. Catalyzes the NADPH-dependent reduction of N-acetyl-5-glutamyl phosphate to yield N-acetyl-L-glutamate 5-semialdehyde. The sequence is that of N-acetyl-gamma-glutamyl-phosphate reductase from Clostridium kluyveri (strain NBRC 12016).